The chain runs to 374 residues: 4-hydroxy-3-methylbut-2-en-1-yl diphosphate synthase (flavodoxin) (374 aa).

4 residues coordinate [4Fe-4S] cluster: Cys270, Cys273, Cys305, and Glu312.

Belongs to the IspG family. The cofactor is [4Fe-4S] cluster.

The enzyme catalyses (2E)-4-hydroxy-3-methylbut-2-enyl diphosphate + oxidized [flavodoxin] + H2O + 2 H(+) = 2-C-methyl-D-erythritol 2,4-cyclic diphosphate + reduced [flavodoxin]. It functions in the pathway isoprenoid biosynthesis; isopentenyl diphosphate biosynthesis via DXP pathway; isopentenyl diphosphate from 1-deoxy-D-xylulose 5-phosphate: step 5/6. Functionally, converts 2C-methyl-D-erythritol 2,4-cyclodiphosphate (ME-2,4cPP) into 1-hydroxy-2-methyl-2-(E)-butenyl 4-diphosphate. In Vibrio cholerae serotype O1 (strain ATCC 39315 / El Tor Inaba N16961), this protein is 4-hydroxy-3-methylbut-2-en-1-yl diphosphate synthase (flavodoxin).